Consider the following 876-residue polypeptide: DNA mismatch repair protein MutS (876 aa).

Position 626–633 (626–633 (GPNMGGKS)) interacts with ATP.

It belongs to the DNA mismatch repair MutS family.

Functionally, this protein is involved in the repair of mismatches in DNA. It is possible that it carries out the mismatch recognition step. This protein has a weak ATPase activity. This is DNA mismatch repair protein MutS from Bordetella bronchiseptica (strain ATCC BAA-588 / NCTC 13252 / RB50) (Alcaligenes bronchisepticus).